We begin with the raw amino-acid sequence, 430 residues long: Shufflon protein A' (430 aa).

A constant region region spans residues 1-361 (MKKYDRGWAS…TGAILSCQSG (361 aa)). The variable region stretch occupies residues 362-430 (TWGTIGGKLK…GCIASCVTLN (69 aa)).

The chain is Shufflon protein A' from Escherichia coli.